The following is a 348-amino-acid chain: LRP2-binding protein (348 aa).

One copy of the TPR repeat lies at 60-93 (TLAYFLRGQLYFEEGWYEEALEQFEEIEEKDHQA). 6 Sel1-like repeats span residues 94–126 (TYQLGVMYYDGLGTILNSEKGVDYMKKILDSPC), 134–169 (FAAAYNLGRAYYEGKGVKRSNEEAERLWLFAADNGN), 174–207 (VKAQSMLGLYYSTKEPKELEKAFYWHSEACGNGN), 208–243 (LESQGALGLMYLYGQGIRQDTEAALHCLREAAERGN), 244–278 (VYAQGNLVEYYYKMKFFTKCVAFSKRIADYDEVHD), and 298–333 (AMASFYHARCLQLGLGITRDEATAKHYYSKACRLNP).

Interacts with LRP2.

Its subcellular location is the cytoplasm. Its function is as follows. May act as an adapter that regulates LRP2 function. This chain is LRP2-binding protein (LRP2BP), found in Macaca fascicularis (Crab-eating macaque).